The primary structure comprises 203 residues: FMN-dependent NADH:quinone oxidoreductase (203 aa).

FMN is bound by residues serine 9, 15–17 (SVS), and 138–141 (SRGG).

This sequence belongs to the azoreductase type 1 family. As to quaternary structure, homodimer. Requires FMN as cofactor.

The catalysed reaction is 2 a quinone + NADH + H(+) = 2 a 1,4-benzosemiquinone + NAD(+). It carries out the reaction N,N-dimethyl-1,4-phenylenediamine + anthranilate + 2 NAD(+) = 2-(4-dimethylaminophenyl)diazenylbenzoate + 2 NADH + 2 H(+). In terms of biological role, quinone reductase that provides resistance to thiol-specific stress caused by electrophilic quinones. Functionally, also exhibits azoreductase activity. Catalyzes the reductive cleavage of the azo bond in aromatic azo compounds to the corresponding amines. The protein is FMN-dependent NADH:quinone oxidoreductase of Methylorubrum extorquens (strain CM4 / NCIMB 13688) (Methylobacterium extorquens).